A 350-amino-acid chain; its full sequence is GTP 3',8-cyclase (350 aa).

Residues 27-245 (TFGRIATDLR…LRAHFTLVPD (219 aa)) enclose the Radical SAM core domain. Arg36 is a binding site for GTP. Residues Cys43 and Cys47 each contribute to the [4Fe-4S] cluster site. Residue Tyr49 coordinates S-adenosyl-L-methionine. Cys50 serves as a coordination point for [4Fe-4S] cluster. Arg87 contributes to the GTP binding site. An S-adenosyl-L-methionine-binding site is contributed by Gly91. Thr118 provides a ligand contact to GTP. Ser142 is a binding site for S-adenosyl-L-methionine. Lys179 is a binding site for GTP. Met213 is a binding site for S-adenosyl-L-methionine. The [4Fe-4S] cluster site is built by Cys277 and Cys280. A GTP-binding site is contributed by 282 to 284 (RTR). Residue Cys294 participates in [4Fe-4S] cluster binding.

The protein belongs to the radical SAM superfamily. MoaA family. As to quaternary structure, monomer and homodimer. The cofactor is [4Fe-4S] cluster.

The catalysed reaction is GTP + AH2 + S-adenosyl-L-methionine = (8S)-3',8-cyclo-7,8-dihydroguanosine 5'-triphosphate + 5'-deoxyadenosine + L-methionine + A + H(+). It participates in cofactor biosynthesis; molybdopterin biosynthesis. Its function is as follows. Catalyzes the cyclization of GTP to (8S)-3',8-cyclo-7,8-dihydroguanosine 5'-triphosphate. The sequence is that of GTP 3',8-cyclase from Mycobacterium sp. (strain JLS).